The sequence spans 576 residues: DM7 family protein GD16138 (576 aa).

A disordered region spans residues 454–481 (FPELEPDSEPEPEPEPQTEDEGEDEGDK). A compositionally biased stretch (acidic residues) spans 457–478 (LEPDSEPEPEPEPQTEDEGEDE).

It belongs to the DM7 family.

This is DM7 family protein GD16138 from Drosophila simulans (Fruit fly).